A 488-amino-acid chain; its full sequence is Germacrene A hydroxylase (488 aa).

The Cytoplasmic portion of the chain corresponds to 1-6; that stretch reads MELSIT. A helical; Signal-anchor for type II membrane protein membrane pass occupies residues 7 to 23; it reads TSIALATIVFFLYKLAT. The Lumenal portion of the chain corresponds to 24 to 488; it reads RPKSTKKQLP…KTELLLVPSF (465 aa). N-linked (GlcNAc...) asparagine glycans are attached at residues N169, N260, and N379. Position 432 (C432) interacts with heme.

It belongs to the cytochrome P450 family. The cofactor is heme.

The protein localises to the endoplasmic reticulum membrane. It carries out the reaction (+)-(R)-germacrene A + 3 reduced [NADPH--hemoprotein reductase] + 3 O2 = germacra-1(10),4,11(13)-trien-12-oate + 3 oxidized [NADPH--hemoprotein reductase] + 4 H2O + 4 H(+). The protein operates within secondary metabolite biosynthesis; terpenoid biosynthesis. In terms of biological role, involved in the biosynthesis of germacrene-derived sesquiterpene lactones. Catalyzes three consecutive oxidations of germacrene A to produce germacrene A acid. Could also catalyze the three-step oxidation of non-natural substrate amorphadiene to artemisinic acid. The polypeptide is Germacrene A hydroxylase (Lactuca sativa (Garden lettuce)).